Here is a 441-residue protein sequence, read N- to C-terminus: Serine hydroxymethyltransferase (441 aa).

(6S)-5,6,7,8-tetrahydrofolate-binding positions include L119 and G123–L125. K228 carries the N6-(pyridoxal phosphate)lysine modification. A (6S)-5,6,7,8-tetrahydrofolate-binding site is contributed by S370–F372.

The protein belongs to the SHMT family. As to quaternary structure, homodimer. Pyridoxal 5'-phosphate serves as cofactor.

It localises to the cytoplasm. The enzyme catalyses (6R)-5,10-methylene-5,6,7,8-tetrahydrofolate + glycine + H2O = (6S)-5,6,7,8-tetrahydrofolate + L-serine. It participates in one-carbon metabolism; tetrahydrofolate interconversion. Its pathway is amino-acid biosynthesis; glycine biosynthesis; glycine from L-serine: step 1/1. Its function is as follows. Catalyzes the reversible interconversion of serine and glycine with tetrahydrofolate (THF) serving as the one-carbon carrier. This reaction serves as the major source of one-carbon groups required for the biosynthesis of purines, thymidylate, methionine, and other important biomolecules. Also exhibits THF-independent aldolase activity toward beta-hydroxyamino acids, producing glycine and aldehydes, via a retro-aldol mechanism. This Chlorobium phaeovibrioides (strain DSM 265 / 1930) (Prosthecochloris vibrioformis (strain DSM 265)) protein is Serine hydroxymethyltransferase.